A 276-amino-acid polypeptide reads, in one-letter code: Diaminopimelate epimerase (276 aa).

Substrate contacts are provided by N13, Q46, and N66. C75 serves as the catalytic Proton donor. Substrate is bound by residues 76–77 (GN), N159, N192, and 210–211 (ER). The active-site Proton acceptor is the C219. Substrate is bound at residue 220–221 (GS).

It belongs to the diaminopimelate epimerase family. As to quaternary structure, homodimer.

It localises to the cytoplasm. It catalyses the reaction (2S,6S)-2,6-diaminopimelate = meso-2,6-diaminopimelate. The protein operates within amino-acid biosynthesis; L-lysine biosynthesis via DAP pathway; DL-2,6-diaminopimelate from LL-2,6-diaminopimelate: step 1/1. Its function is as follows. Catalyzes the stereoinversion of LL-2,6-diaminopimelate (L,L-DAP) to meso-diaminopimelate (meso-DAP), a precursor of L-lysine and an essential component of the bacterial peptidoglycan. The protein is Diaminopimelate epimerase of Coxiella burnetii (strain CbuK_Q154) (Coxiella burnetii (strain Q154)).